The chain runs to 339 residues: Glycerol-3-phosphate dehydrogenase [NAD(P)+] (339 aa).

NADPH is bound by residues Ser11, Trp12, and Lys109. Residues Lys109, Gly140, and Ser142 each coordinate sn-glycerol 3-phosphate. Ala144 is a binding site for NADPH. The sn-glycerol 3-phosphate site is built by Lys195, Asp249, Ser259, Arg260, and Asn261. Lys195 (proton acceptor) is an active-site residue. Arg260 serves as a coordination point for NADPH. Residues Val284 and Glu286 each contribute to the NADPH site.

The protein belongs to the NAD-dependent glycerol-3-phosphate dehydrogenase family.

The protein resides in the cytoplasm. The catalysed reaction is sn-glycerol 3-phosphate + NAD(+) = dihydroxyacetone phosphate + NADH + H(+). The enzyme catalyses sn-glycerol 3-phosphate + NADP(+) = dihydroxyacetone phosphate + NADPH + H(+). The protein operates within membrane lipid metabolism; glycerophospholipid metabolism. Functionally, catalyzes the reduction of the glycolytic intermediate dihydroxyacetone phosphate (DHAP) to sn-glycerol 3-phosphate (G3P), the key precursor for phospholipid synthesis. This is Glycerol-3-phosphate dehydrogenase [NAD(P)+] from Lactobacillus helveticus (strain DPC 4571).